The primary structure comprises 231 residues: Large ribosomal subunit protein uL1 (231 aa).

This sequence belongs to the universal ribosomal protein uL1 family. Part of the 50S ribosomal subunit.

Binds directly to 23S rRNA. The L1 stalk is quite mobile in the ribosome, and is involved in E site tRNA release. Its function is as follows. Protein L1 is also a translational repressor protein, it controls the translation of the L11 operon by binding to its mRNA. The chain is Large ribosomal subunit protein uL1 from Carboxydothermus hydrogenoformans (strain ATCC BAA-161 / DSM 6008 / Z-2901).